Consider the following 538-residue polypeptide: Ribosome-associated complex subunit SSZ1 (538 aa).

The segment at 400–538 is peptide-binding domain; the sequence is PVIVNTPHLK…KTGNAVKGEL (139 aa). The tract at residues 464 to 484 is disordered; sequence PIPKEENAEEDDESEWSDDEP. A compositionally biased stretch (acidic residues) spans 470–484; it reads NAEEDDESEWSDDEP. Residues Ser477 and Ser480 each carry the phosphoserine modification.

This sequence belongs to the heat shock protein 70 family. In terms of assembly, RAC is a heterodimer of the Hsp70/DnaK-type chaperone SSZ1 and the Hsp40/DnaJ-type chaperone ZUO1. RAC associates with ribosomes via ZUO1.

It localises to the cytoplasm. Component of the ribosome-associated complex (RAC), a heterodimeric chaperone complex involved in regulation of accurate translation termination and in folding or maintaining nascent polypeptides in a folding-competent state. RAC stimulates the ATPase activity of the ribosome-associated pool of Hsp70-type chaperones SSB1/SSB2 that bind to the nascent polypeptide chain. SSZ1 is required for ZUO1 to function efficiently as a J-protein for SSB1/SSB2. Also involved in pleiotropic drug resistance by post-translational activation of transcription factor PDR1. This chain is Ribosome-associated complex subunit SSZ1 (SSZ1), found in Saccharomyces cerevisiae (strain ATCC 204508 / S288c) (Baker's yeast).